We begin with the raw amino-acid sequence, 396 residues long: Stearoyl-[acyl-carrier-protein] 9-desaturase 5, chloroplastic (396 aa).

A chloroplast-targeting transit peptide spans 1-29 (MAMAMDRIVFSPSSYVYRPCQARGSRSSR). 6 residues coordinate Fe cation: glutamate 137, glutamate 175, histidine 178, glutamate 228, glutamate 261, and histidine 264.

It belongs to the fatty acid desaturase type 2 family. Homodimer. It depends on Fe(2+) as a cofactor. As to expression, ubiquitously expressed with a preference in leaves, flowers and stems.

It localises to the plastid. It is found in the chloroplast stroma. The enzyme catalyses octadecanoyl-[ACP] + 2 reduced [2Fe-2S]-[ferredoxin] + O2 + 2 H(+) = (9Z)-octadecenoyl-[ACP] + 2 oxidized [2Fe-2S]-[ferredoxin] + 2 H2O. It functions in the pathway lipid metabolism; fatty acid metabolism. Converts stearoyl-ACP to oleoyl-ACP by introduction of a cis double bond between carbons 9 and 10 of the acyl chain. The chain is Stearoyl-[acyl-carrier-protein] 9-desaturase 5, chloroplastic (S-ACP-DES5) from Arabidopsis thaliana (Mouse-ear cress).